The chain runs to 629 residues: Histone-lysine N-methyltransferase set9 (629 aa).

Positions 120–234 (CPFEVTTTNR…IGEEITVSYG (115 aa)) constitute an SET domain. Composition is skewed to polar residues over residues 264 to 274 (SEASSTASTPA), 338 to 350 (EQNT…TTTD), 359 to 376 (NGVT…NQRA), and 390 to 400 (ESQNSSASTAP). Disordered regions lie at residues 264–400 (SEAS…STAP) and 586–629 (VSFG…RMTM). Over residues 597-614 (SEPRTETEDSEACDERRN) the composition is skewed to basic and acidic residues.

It belongs to the class V-like SAM-binding methyltransferase superfamily. Histone-lysine methyltransferase family. Suvar4-20 subfamily.

The protein resides in the nucleus. It is found in the chromosome. The enzyme catalyses L-lysyl(20)-[histone H4] + 3 S-adenosyl-L-methionine = N(6),N(6),N(6)-trimethyl-L-lysyl(20)-[histone H4] + 3 S-adenosyl-L-homocysteine + 3 H(+). In terms of biological role, histone methyltransferase that trimethylates 'Lys-20' of histone H4 to form H4K20me3. This Aspergillus terreus (strain NIH 2624 / FGSC A1156) protein is Histone-lysine N-methyltransferase set9 (set9).